A 225-amino-acid polypeptide reads, in one-letter code: Peptidyl-tRNA hydrolase (225 aa).

Y14 contributes to the tRNA binding site. The active-site Proton acceptor is H19. Residues F64, N66, and N112 each coordinate tRNA. The tract at residues 184 to 225 (ALRMQPPKPEKPKPAAKAPEAQAPEAAPDARSALQKLADRFR) is disordered. The span at 198–210 (AAKAPEAQAPEAA) shows a compositional bias: low complexity.

This sequence belongs to the PTH family. As to quaternary structure, monomer.

The protein localises to the cytoplasm. The catalysed reaction is an N-acyl-L-alpha-aminoacyl-tRNA + H2O = an N-acyl-L-amino acid + a tRNA + H(+). Functionally, hydrolyzes ribosome-free peptidyl-tRNAs (with 1 or more amino acids incorporated), which drop off the ribosome during protein synthesis, or as a result of ribosome stalling. Catalyzes the release of premature peptidyl moieties from peptidyl-tRNA molecules trapped in stalled 50S ribosomal subunits, and thus maintains levels of free tRNAs and 50S ribosomes. This chain is Peptidyl-tRNA hydrolase, found in Cereibacter sphaeroides (strain KD131 / KCTC 12085) (Rhodobacter sphaeroides).